Consider the following 91-residue polypeptide: Early E3B 10.4 kDa protein (91 aa).

An N-terminal signal peptide occupies residues 1 to 21 (MVTVLLIFLCLPVIFSSSTFA). Residues 22 to 33 (AVSDLDPECLAP) lie on the Lumenal side of the membrane. Residues 34 to 56 (FAVYLIFTFVTATCVCSIITLLI) traverse the membrane as a helical segment. At 57–91 (TSLQFFDYYYVRIVYRRHHPRYQNPQIAALLQLQP) the chain is on the cytoplasmic side.

This sequence belongs to the adenoviridae E3B family.

The protein localises to the host endoplasmic reticulum membrane. Its function is as follows. Down-regulates the EGF receptor. The protein is Early E3B 10.4 kDa protein of Homo sapiens (Human).